The chain runs to 26 residues: Dermaseptin-B5 (26 aa).

Val-26 bears the Valine amide mark.

It belongs to the frog skin active peptide (FSAP) family. Dermaseptin subfamily. As to expression, expressed by the skin glands.

It is found in the secreted. In terms of biological role, possesses a potent antimicrobial activity against Gram-positive and Gram-negative bacteria. Probably acts by disturbing membrane functions with its amphipathic structure. In Phyllomedusa bicolor (Two-colored leaf frog), this protein is Dermaseptin-B5.